A 357-amino-acid polypeptide reads, in one-letter code: Fructose-bisphosphate aldolase (357 aa).

Substrate is bound by residues R49 and K140. Residue E183 is the Proton acceptor of the active site. K225 acts as the Schiff-base intermediate with dihydroxyacetone-P in catalysis.

It belongs to the class I fructose-bisphosphate aldolase family.

The catalysed reaction is beta-D-fructose 1,6-bisphosphate = D-glyceraldehyde 3-phosphate + dihydroxyacetone phosphate. Its pathway is carbohydrate degradation; glycolysis; D-glyceraldehyde 3-phosphate and glycerone phosphate from D-glucose: step 4/4. This Dictyostelium discoideum (Social amoeba) protein is Fructose-bisphosphate aldolase (fba).